A 396-amino-acid chain; its full sequence is Deoxyguanosinetriphosphate triphosphohydrolase-like protein (396 aa).

The HD domain maps to 62 to 198 (RLTHSLEVAQ…AALADDIAYN (137 aa)).

Belongs to the dGTPase family. Type 2 subfamily.

In Jannaschia sp. (strain CCS1), this protein is Deoxyguanosinetriphosphate triphosphohydrolase-like protein.